The following is a 286-amino-acid chain: Probable ketoamine kinase YniA (286 aa).

91-93 (DYL) is a binding site for ATP. The active-site Proton acceptor is the Asp-193.

The protein belongs to the fructosamine kinase family.

In terms of biological role, ketoamine kinase that phosphorylates ketoamines on the third carbon of the sugar moiety to generate ketoamine 3-phosphate. The sequence is that of Probable ketoamine kinase YniA (yniA) from Escherichia coli O157:H7.